Consider the following 467-residue polypeptide: Mitochondrial distribution and morphology protein 10 (467 aa).

The protein belongs to the MDM10 family. In terms of assembly, component of the ER-mitochondria encounter structure (ERMES) or MDM complex, composed of MMM1, MDM10, MDM12 and MDM34. Associates with the mitochondrial outer membrane sorting assembly machinery SAM(core) complex.

Its subcellular location is the mitochondrion outer membrane. Component of the ERMES/MDM complex, which serves as a molecular tether to connect the endoplasmic reticulum and mitochondria. Components of this complex are involved in the control of mitochondrial shape and protein biogenesis and may function in phospholipid exchange. MDM10 is involved in the late assembly steps of the general translocase of the mitochondrial outer membrane (TOM complex). Functions in the TOM40-specific route of the assembly of outer membrane beta-barrel proteins, including the association of TOM40 with the receptor TOM22 and small TOM proteins. Can associate with the SAM(core) complex as well as the MDM12-MMM1 complex, both involved in late steps of the major beta-barrel assembly pathway, that is responsible for biogenesis of all outer membrane beta-barrel proteins. May act as a switch that shuttles between both complexes and channels precursor proteins into the TOM40-specific pathway. Plays a role in mitochondrial morphology and in the inheritance of mitochondria. This chain is Mitochondrial distribution and morphology protein 10, found in Ajellomyces capsulatus (strain G186AR / H82 / ATCC MYA-2454 / RMSCC 2432) (Darling's disease fungus).